Reading from the N-terminus, the 263-residue chain is uncharacterized protein (263 aa).

An N-terminal signal peptide occupies residues 1–22 (MRYLKRVVLYRIVMVLSVFIIG). Cys-23 is lipidated: N-palmitoyl cysteine. A lipid anchor (S-diacylglycerol cysteine) is attached at Cys-23.

The protein belongs to the staphylococcal tandem lipoprotein family.

The protein localises to the cell membrane. This is an uncharacterized protein from Staphylococcus aureus (strain bovine RF122 / ET3-1).